The sequence spans 291 residues: MEMO1 family protein PYRAB05390 (291 aa).

The protein belongs to the MEMO1 family.

This is MEMO1 family protein PYRAB05390 from Pyrococcus abyssi (strain GE5 / Orsay).